The sequence spans 316 residues: Ribosomal RNA small subunit methyltransferase H (316 aa).

S-adenosyl-L-methionine is bound by residues 37-39 (GGH), D56, F83, D106, and H113. The tract at residues 276 to 316 (PILPSEEETKENPASRSAKLRVLRKTKSADKKYKKENSKEE) is disordered. Over residues 302 to 316 (KSADKKYKKENSKEE) the composition is skewed to basic and acidic residues.

This sequence belongs to the methyltransferase superfamily. RsmH family.

Its subcellular location is the cytoplasm. The catalysed reaction is cytidine(1402) in 16S rRNA + S-adenosyl-L-methionine = N(4)-methylcytidine(1402) in 16S rRNA + S-adenosyl-L-homocysteine + H(+). Functionally, specifically methylates the N4 position of cytidine in position 1402 (C1402) of 16S rRNA. In Leptospira borgpetersenii serovar Hardjo-bovis (strain L550), this protein is Ribosomal RNA small subunit methyltransferase H.